The chain runs to 498 residues: Guanosine-5'-triphosphate,3'-diphosphate pyrophosphatase (498 aa).

This sequence belongs to the GppA/Ppx family. GppA subfamily.

The catalysed reaction is guanosine 3'-diphosphate 5'-triphosphate + H2O = guanosine 3',5'-bis(diphosphate) + phosphate + H(+). It functions in the pathway purine metabolism; ppGpp biosynthesis; ppGpp from GTP: step 2/2. Its function is as follows. Catalyzes the conversion of pppGpp to ppGpp. Guanosine pentaphosphate (pppGpp) is a cytoplasmic signaling molecule which together with ppGpp controls the 'stringent response', an adaptive process that allows bacteria to respond to amino acid starvation, resulting in the coordinated regulation of numerous cellular activities. This is Guanosine-5'-triphosphate,3'-diphosphate pyrophosphatase from Pectobacterium carotovorum subsp. carotovorum (strain PC1).